The sequence spans 428 residues: Chaperone SurA (428 aa).

Residues 1–19 (MNIWKTLLLGMLVTGSAVS) form the signal peptide. PpiC domains follow at residues 170–268 (SVEY…KIED) and 277–377 (VTEV…EVLD).

It localises to the periplasm. It catalyses the reaction [protein]-peptidylproline (omega=180) = [protein]-peptidylproline (omega=0). Functionally, chaperone involved in the correct folding and assembly of outer membrane proteins. Recognizes specific patterns of aromatic residues and the orientation of their side chains, which are found more frequently in integral outer membrane proteins. May act in both early periplasmic and late outer membrane-associated steps of protein maturation. The sequence is that of Chaperone SurA from Vibrio vulnificus (strain CMCP6).